The sequence spans 237 residues: Splicing factor U2AF 35 kDa subunit (237 aa).

Ala-2 carries the N-acetylalanine modification. The segment at 12–40 adopts a C3H1-type 1 zinc-finger fold; it reads EKDKVNCSFYFKIGACRHGDRCSRLHNKP. Position 39 is an N6-methyllysine (Lys-39). 2 positions are modified to phosphoserine: Ser-61 and Ser-145. The RRM domain occupies 65 to 147; that stretch reads LRCAVSDVEM…QPIHAELSPV (83 aa). The C3H1-type 2 zinc-finger motif lies at 149–176; that stretch reads DFREACCRQYEMGECTRGGFCNFMHLKP. An Omega-N-methylarginine modification is found at Arg-165. The tract at residues 185–237 is disordered; it reads LYGRRRKKHRSRSRSRERRSRSRDRGRGGGGGGGGGRERDRRRSRDRERSGRF. Residues 188–208 are compositionally biased toward basic residues; sequence RRRKKHRSRSRSRERRSRSRD. Positions 220 to 237 are enriched in basic and acidic residues; that stretch reads GRERDRRRSRDRERSGRF.

Belongs to the splicing factor SR family. In terms of assembly, identified in the spliceosome C complex. Heterodimer with U2AF2. Interacts (via RS domain) with PHF5A (via N-terminus). Interacts with ZRANB2. Interacts with SDE2. Interacts with SF3B1.

The protein resides in the nucleus. Its subcellular location is the nucleus speckle. Plays a critical role in both constitutive and enhancer-dependent splicing by mediating protein-protein interactions and protein-RNA interactions required for accurate 3'-splice site selection. Recruits U2 snRNP to the branch point. Directly mediates interactions between U2AF2 and proteins bound to the enhancers and thus may function as a bridge between U2AF2 and the enhancer complex to recruit it to the adjacent intron. The polypeptide is Splicing factor U2AF 35 kDa subunit (U2AF1) (Bos taurus (Bovine)).